Here is a 180-residue protein sequence, read N- to C-terminus: Flavodoxin 2 (180 aa).

Residues 4-173 (IGLFFGSNTG…RVAAWLAQIA (170 aa)) form the Flavodoxin-like domain. Residues 10–15 (SNTGKT), threonine 57, glycine 61, aspartate 99, 106–108 (NYL), and aspartate 155 contribute to the FMN site.

The cofactor is FMN.

Functionally, flavodoxins are low-potential electron donors to a number of redox enzymes. NifF is the electron donor to nitrogenase, and is thus implicated in nitrogen fixation. Does not function as an electron donor to nitrite reductase. This is Flavodoxin 2 from Azotobacter vinelandii.